A 106-amino-acid polypeptide reads, in one-letter code: RNA-binding protein Hfq (106 aa).

In terms of domain architecture, Sm spans Asp9–Ile68. The disordered stretch occupies residues Glu78–Asp106.

Belongs to the Hfq family. As to quaternary structure, homohexamer.

In terms of biological role, RNA chaperone that binds small regulatory RNA (sRNAs) and mRNAs to facilitate mRNA translational regulation in response to envelope stress, environmental stress and changes in metabolite concentrations. Also binds with high specificity to tRNAs. This chain is RNA-binding protein Hfq, found in Dichelobacter nodosus (strain VCS1703A).